The sequence spans 381 residues: tRNA-specific 2-thiouridylase MnmA (381 aa).

ATP is bound by residues 9–16 (GMSGGVDS) and Met-35. Residues 95 to 97 (NPD) form an interaction with target base in tRNA region. Catalysis depends on Cys-100, which acts as the Nucleophile. Residues Cys-100 and Cys-196 are joined by a disulfide bond. Gly-124 is a binding site for ATP. The segment at 146-148 (KDQ) is interaction with tRNA. Cys-196 functions as the Cysteine persulfide intermediate in the catalytic mechanism. Residues 308–309 (RY) are interaction with tRNA.

Belongs to the MnmA/TRMU family.

The protein resides in the cytoplasm. It carries out the reaction S-sulfanyl-L-cysteinyl-[protein] + uridine(34) in tRNA + AH2 + ATP = 2-thiouridine(34) in tRNA + L-cysteinyl-[protein] + A + AMP + diphosphate + H(+). Its function is as follows. Catalyzes the 2-thiolation of uridine at the wobble position (U34) of tRNA, leading to the formation of s(2)U34. The sequence is that of tRNA-specific 2-thiouridylase MnmA from Burkholderia multivorans (strain ATCC 17616 / 249).